We begin with the raw amino-acid sequence, 345 residues long: Protein RecA (345 aa).

Residue 65–72 (GPESSGKT) participates in ATP binding. Residues 326 to 336 (EKFQPAEAARE) show a composition bias toward basic and acidic residues. The disordered stretch occupies residues 326–345 (EKFQPAEAAREEGDDEGEDE).

Belongs to the RecA family.

Its subcellular location is the cytoplasm. In terms of biological role, can catalyze the hydrolysis of ATP in the presence of single-stranded DNA, the ATP-dependent uptake of single-stranded DNA by duplex DNA, and the ATP-dependent hybridization of homologous single-stranded DNAs. It interacts with LexA causing its activation and leading to its autocatalytic cleavage. The polypeptide is Protein RecA (Stenotrophomonas maltophilia (strain K279a)).